The primary structure comprises 102 residues: UPF0058 protein MTH_224 (102 aa).

This sequence belongs to the UPF0058 family.

In Methanothermobacter thermautotrophicus (strain ATCC 29096 / DSM 1053 / JCM 10044 / NBRC 100330 / Delta H) (Methanobacterium thermoautotrophicum), this protein is UPF0058 protein MTH_224.